Consider the following 426-residue polypeptide: Elongation factor 1-alpha (426 aa).

The tr-type G domain occupies 5–221; sequence KPHINLAVIG…NALKEPEKPT (217 aa). The G1 stretch occupies residues 14 to 21; that stretch reads GHIDHGKS. Position 14 to 21 (14 to 21) interacts with GTP; that stretch reads GHIDHGKS. S21 contacts Mg(2+). Positions 70 to 74 are G2; that stretch reads GITID. Residues 91 to 94 form a G3 region; the sequence is DCPG. GTP contacts are provided by residues 91 to 95 and 146 to 149; these read DCPGH and NKMD. The interval 146-149 is G4; that stretch reads NKMD. Positions 185–187 are G5; that stretch reads SAF.

The protein belongs to the TRAFAC class translation factor GTPase superfamily. Classic translation factor GTPase family. EF-Tu/EF-1A subfamily.

It is found in the cytoplasm. The enzyme catalyses GTP + H2O = GDP + phosphate + H(+). Its function is as follows. GTP hydrolase that promotes the GTP-dependent binding of aminoacyl-tRNA to the A-site of ribosomes during protein biosynthesis. This chain is Elongation factor 1-alpha, found in Methanocella arvoryzae (strain DSM 22066 / NBRC 105507 / MRE50).